The sequence spans 20 residues: Cathepsin L1 (20 aa).

The span at 1–10 (AVPDKIDPRE) shows a compositional bias: basic and acidic residues. The disordered stretch occupies residues 1 to 20 (AVPDKIDPRESGYVTGVKDQ).

Belongs to the peptidase C1 family. In terms of assembly, dimer of a heavy and a light chain linked by disulfide bonds.

It is found in the lysosome. It carries out the reaction Specificity close to that of papain. As compared to cathepsin B, cathepsin L exhibits higher activity toward protein substrates, but has little activity on Z-Arg-Arg-NHMec, and no peptidyl-dipeptidase activity.. Thiol protease that assists the parasite in burrowing through the gut wall and liver of its mammalian host. The protein is Cathepsin L1 of Fasciola hepatica (Liver fluke).